The primary structure comprises 305 residues: RxLR effector protein 17 (305 aa).

A signal peptide spans 1 to 24 (MQSILWFALIASVVFLVLVDLASG). The short motif at 45 to 60 (RLLRAAHLDRKLSEER) is the RxLR-dEER element. Residues asparagine 207 and asparagine 227 are each glycosylated (N-linked (GlcNAc...) asparagine). Positions 247–269 (LHLKWAVEAKSPKDVVERILKDL) are w motif.

Belongs to the RxLR effector family. Interacts with host A.thaliana At1G14340.

Its subcellular location is the secreted. The protein localises to the host cell membrane. Functionally, secreted effector that confers enhanced plant susceptibility during both compatible and incompatible interactions between the pathogen and its host. Promotes the sexual reproduction of the pathogen in the plant host. This chain is RxLR effector protein 17, found in Hyaloperonospora arabidopsidis (strain Emoy2) (Downy mildew agent).